The chain runs to 286 residues: 4-hydroxy-tetrahydrodipicolinate synthase 2 (286 aa).

Residue threonine 45 participates in pyruvate binding. Tyrosine 133 serves as the catalytic Proton donor/acceptor. The active-site Schiff-base intermediate with substrate is the lysine 161. Isoleucine 203 is a binding site for pyruvate.

The protein belongs to the DapA family. In terms of assembly, homotetramer; dimer of dimers.

Its subcellular location is the cytoplasm. It catalyses the reaction L-aspartate 4-semialdehyde + pyruvate = (2S,4S)-4-hydroxy-2,3,4,5-tetrahydrodipicolinate + H2O + H(+). It participates in amino-acid biosynthesis; L-lysine biosynthesis via DAP pathway; (S)-tetrahydrodipicolinate from L-aspartate: step 3/4. In terms of biological role, catalyzes the condensation of (S)-aspartate-beta-semialdehyde [(S)-ASA] and pyruvate to 4-hydroxy-tetrahydrodipicolinate (HTPA). The protein is 4-hydroxy-tetrahydrodipicolinate synthase 2 of Clostridium acetobutylicum (strain ATCC 824 / DSM 792 / JCM 1419 / IAM 19013 / LMG 5710 / NBRC 13948 / NRRL B-527 / VKM B-1787 / 2291 / W).